The sequence spans 94 residues: MAMLESYLKKQVLVLTADGRSIIGTLRGIDQTINVVLEKCHERVYSDEGIEVIPLGVHLIKGDDVAVIGEVDDELDKKLNLKEIIAEPMKPIVH.

The Sm domain occupies 1 to 74 (MAMLESYLKK…VAVIGEVDDE (74 aa)).

It belongs to the snRNP Sm proteins family. In terms of assembly, component of the precatalytic spliceosome (spliceosome B complex). Component of the U4/U6-U5 tri-snRNP complex, a building block of the precatalytic spliceosome (spliceosome B complex). LSM2, LSM3, LSM4, LSM5, LSM6, LSM7 and LSM8 form a heptameric, ring-shaped subcomplex (the LSM2-8 complex) that is part of the U4/U6-U5 tri-snRNP complex and the precatalytic spliceosome.

The protein localises to the nucleus. In terms of biological role, plays a role in pre-mRNA splicing as component of the U4/U6-U5 tri-snRNP complex that is involved in spliceosome assembly, and as component of the precatalytic spliceosome (spliceosome B complex). The heptameric LSM2-8 complex binds specifically to the 3'-terminal U-tract of U6 snRNA. The polypeptide is Probable U6 snRNA-associated Sm-like protein LSm8 (lsm8) (Dictyostelium discoideum (Social amoeba)).